We begin with the raw amino-acid sequence, 268 residues long: Putative esterase/lipase 2 (268 aa).

H28 is a catalytic residue. H96 acts as the Charge relay system in catalysis.

The protein belongs to the lipase/esterase LIP3/BchO family.

This is Putative esterase/lipase 2 from Mycoplasma pneumoniae (strain ATCC 29342 / M129 / Subtype 1) (Mycoplasmoides pneumoniae).